A 56-amino-acid polypeptide reads, in one-letter code: Large ribosomal subunit protein bL32 (56 aa).

Over residues 1–16 the composition is skewed to basic residues; it reads MAVQKSKKSRSMRGMR. Residues 1-22 form a disordered region; the sequence is MAVQKSKKSRSMRGMRRSHDAL.

This sequence belongs to the bacterial ribosomal protein bL32 family.

The protein is Large ribosomal subunit protein bL32 of Aliivibrio salmonicida (strain LFI1238) (Vibrio salmonicida (strain LFI1238)).